The chain runs to 416 residues: Interleukin-1 receptor type 2 (416 aa).

The signal sequence occupies residues 1 to 13 (MFILLVLVTGVSA). The Extracellular portion of the chain corresponds to 14 to 355 (FTTPAVVHTG…FQSLHTTVKE (342 aa)). 3 Ig-like C2-type domains span residues 29-136 (PVTS…LELK), 146-233 (PLVS…YNIT), and 249-357 (PVII…KEVS). 3 disulfide bridges follow: cysteine 42-cysteine 128, cysteine 64-cysteine 120, and cysteine 164-cysteine 219. N-linked (GlcNAc...) asparagine glycans are attached at residues asparagine 124, asparagine 208, asparagine 231, and asparagine 289. Cysteine 270 and cysteine 338 are joined by a disulfide. Residues 356-381 (VSSTFSWGIALAPLSLIILVVGAIWI) traverse the membrane as a helical segment. The Cytoplasmic portion of the chain corresponds to 382 to 416 (RRRCKRQAGKTYGLTKLPTDNQDFPSSPNQIKEMK). The interval 396–416 (TKLPTDNQDFPSSPNQIKEMK) is disordered. A compositionally biased stretch (polar residues) spans 399–416 (PTDNQDFPSSPNQIKEMK).

This sequence belongs to the interleukin-1 receptor family. In terms of assembly, associates with IL1RAP to form a non-signaling interleukin-1 receptor complex. A soluble form (sIL1R2) can also be produced by proteolytic cleavage at the cell surface (shedding) involving a metalloproteinase.

Its subcellular location is the membrane. The protein localises to the cell membrane. It localises to the secreted. In terms of biological role, non-signaling receptor for IL1A, IL1B and IL1RN. Reduces IL1B activities. Serves as a decoy receptor by competitive binding to IL1B and preventing its binding to IL1R1. Also modulates cellular response through non-signaling association with IL1RAP after binding to IL1B. IL1R2 (membrane and secreted forms) preferentially binds IL1B and poorly IL1A and IL1RN. The secreted IL1R2 recruits secreted IL1RAP with high affinity; this complex formation may be the dominant mechanism for neutralization of IL1B by secreted/soluble receptors. The protein is Interleukin-1 receptor type 2 (Il1r2) of Rattus norvegicus (Rat).